Here is a 365-residue protein sequence, read N- to C-terminus: Peptide chain release factor 2 (365 aa).

Gln252 bears the N5-methylglutamine mark.

Belongs to the prokaryotic/mitochondrial release factor family. In terms of processing, methylated by PrmC. Methylation increases the termination efficiency of RF2.

The protein localises to the cytoplasm. Functionally, peptide chain release factor 2 directs the termination of translation in response to the peptide chain termination codons UGA and UAA. The sequence is that of Peptide chain release factor 2 from Escherichia coli O9:H4 (strain HS).